Reading from the N-terminus, the 496-residue chain is Rhamnulokinase (496 aa).

Residue Ala-13 to Arg-17 participates in ATP binding. Residues Gly-83 and His-236–Thr-238 contribute to the substrate site. Residue Asp-237 is the Proton acceptor of the active site. Residue Thr-259 participates in ATP binding. Residue Asn-296 coordinates substrate. Gln-304 contributes to the ATP binding site. Cys-353 and Cys-370 are joined by a disulfide. Gly-402 is an ATP binding site. Cysteines 413 and 417 form a disulfide.

It belongs to the rhamnulokinase family. It depends on Mg(2+) as a cofactor.

The enzyme catalyses L-rhamnulose + ATP = L-rhamnulose 1-phosphate + ADP + H(+). Its pathway is carbohydrate degradation; L-rhamnose degradation; glycerone phosphate from L-rhamnose: step 2/3. Involved in the catabolism of L-rhamnose (6-deoxy-L-mannose). Catalyzes the transfer of the gamma-phosphate group from ATP to the 1-hydroxyl group of L-rhamnulose to yield L-rhamnulose 1-phosphate. In Pectobacterium carotovorum subsp. carotovorum (strain PC1), this protein is Rhamnulokinase.